Consider the following 492-residue polypeptide: Cytochrome P450 monooxygenase rdc4 (492 aa).

Heme is bound at residue Cys435.

This sequence belongs to the cytochrome P450 family. Requires heme as cofactor.

It participates in secondary metabolite biosynthesis. Its function is as follows. Cytochrome P450 monooxygenase; part of the gene cluster that mediates the biosynthesis of radicicol, a resorcylic acid lactone (RAL) that irreversibly inhibits the HSP90 molecular chaperone, an important target for cancer chemotherapy. The radicicol cluster encodes only two apparent post-PKS enzymes, a cytochrome P450 monooxygenase (rdc4) and a non-heme halogenase (rdc2) that could introduce the epoxide and the chlorine, respectively. If this cluster includes all the genes required for radicicol biosynthesis, the remaining structural features of radicicol are presumably generated by the PKSs rdc1 and rdc5. The C-2' ketone could arise if the R-PKS rdc5 and NR-PKS rdc1 each carry out four iterations, in contrast to the five iteration-three iteration split for the hypothemycin PKSs. The origin of the cis 5',6' double bond is not known. The radicicol R-PKS rdc5 ER domain may catalyze either double bond isomerization or reduction in the third iteration. The polypeptide is Cytochrome P450 monooxygenase rdc4 (Metacordyceps chlamydosporia (Nematophagous fungus)).